The sequence spans 60 residues: Large ribosomal subunit protein bL32 (60 aa).

This sequence belongs to the bacterial ribosomal protein bL32 family.

This is Large ribosomal subunit protein bL32 from Streptococcus pneumoniae serotype 4 (strain ATCC BAA-334 / TIGR4).